The following is an 83-amino-acid chain: Probable calcium-binding protein CML28 (83 aa).

2 EF-hand domains span residues 5–40 and 43–75; these read TEKA…LGSV and EDIK…NRGL. Ca(2+) contacts are provided by Asp-18, Asn-20, Asp-22, Lys-24, Glu-29, Asp-53, Asp-55, Asp-57, Tyr-59, and Glu-64.

Potential calcium sensor. This is Probable calcium-binding protein CML28 (CML28) from Arabidopsis thaliana (Mouse-ear cress).